A 92-amino-acid chain; its full sequence is RQC P-site tRNA stabilizing factor (92 aa).

The 61-residue stretch at 5-65 (MRLDKYLKVS…GPKIVTAKIE (61 aa)) folds into the S4 RNA-binding domain.

The protein belongs to the RqcP family. In terms of assembly, associates with stalled 50S ribosomal subunits. Binds to RqcH, 23S rRNA and the P-site tRNA. Does not require RqcH for association with 50S subunits.

Its function is as follows. Key component of the ribosome quality control system (RQC), a ribosome-associated complex that mediates the extraction of incompletely synthesized nascent chains from stalled ribosomes and their subsequent degradation. RqcH recruits Ala-charged tRNA, and with RqcP directs the elongation of stalled nascent chains on 50S ribosomal subunits, leading to non-templated C-terminal alanine extensions (Ala tail). The Ala tail promotes nascent chain degradation. RqcP is associated with the translocation-like movement of the peptidyl-tRNA from the A-site into the P-site. The sequence is that of RQC P-site tRNA stabilizing factor from Listeria monocytogenes serovar 1/2a (strain ATCC BAA-679 / EGD-e).